An 872-amino-acid polypeptide reads, in one-letter code: Cyanophycin synthetase (872 aa).

Residues 224-480 (KTILQDAGVP…VAAPVMDMLF (257 aa)) form the ATP-grasp domain. ATP is bound at residue 495–501 (GTNGKTT).

It in the C-terminal section; belongs to the MurCDEF family. Homodimer.

The catalysed reaction is [L-4-(L-arginin-2-N-yl)aspartate](n) + L-aspartate + ATP = [L-4-(L-arginin-2-N-yl)aspartate](n)-L-aspartate + ADP + phosphate + H(+). It carries out the reaction [L-4-(L-arginin-2-N-yl)aspartate](n)-L-aspartate + L-arginine + ATP = [L-4-(L-arginin-2-N-yl)aspartate](n+1) + ADP + phosphate + H(+). Its function is as follows. Catalyzes the ATP-dependent polymerization of arginine and aspartate to multi-L-arginyl-poly-L-aspartic acid (cyanophycin; a water-insoluble reserve polymer). The sequence is that of Cyanophycin synthetase (cphA) from Crocosphaera subtropica (strain ATCC 51142 / BH68) (Cyanothece sp. (strain ATCC 51142)).